The chain runs to 125 residues: CLAVATA3/ESR (CLE)-related protein ESR3 (125 aa).

A signal peptide spans 1–26 (MASRMGMVAIMSLFVYAIVVPTSVNA). The tract at residues 45–125 (QQQGGFIGHR…IGPPPLPDRY (81 aa)) is disordered. Residues P75 and P78 each carry the hydroxyproline modification. O-linked (Ara...) hydroxyproline glycosylation occurs at P78.

Belongs to the CLV3/ESR signal peptide family. Post-translationally, the O-glycosylation (arabinosylation) of the hydroxyproline Pro-78 enhances binding affinity of the ESR3p peptide for its receptor. Seed endosperm.

It is found in the secreted. The protein localises to the extracellular space. Extracellular signal peptide that regulates cell fate. The polypeptide is CLAVATA3/ESR (CLE)-related protein ESR3 (Zea mays (Maize)).